A 68-amino-acid chain; its full sequence is Large ribosomal subunit protein bL32 (68 aa).

The tract at residues 1-20 (MAVQQNKVSKSRRNNRRAHD) is disordered.

It belongs to the bacterial ribosomal protein bL32 family.

This is Large ribosomal subunit protein bL32 from Ruegeria sp. (strain TM1040) (Silicibacter sp.).